We begin with the raw amino-acid sequence, 253 residues long: Neurotrophin-3 (253 aa).

Positions 1 to 18 (MSILFYVMFLAYLRGVQG) are cleaved as a signal peptide. A propeptide spanning residues 19–134 (NSMDQRSLPE…AANRTSRRKR (116 aa)) is cleaved from the precursor. Residues 62–89 (TLPKAEAPPREPAKSEFQPVTAMGPELL) are disordered. N127 carries N-linked (GlcNAc...) asparagine glycosylation. 3 disulfide bridges follow: C148–C213, C191–C242, and C201–C244.

It belongs to the NGF-beta family.

The protein localises to the secreted. In terms of biological role, seems to promote the survival of visceral and proprioceptive sensory neurons. The sequence is that of Neurotrophin-3 (NTF3) from Bos taurus (Bovine).